Consider the following 498-residue polypeptide: Glycerol kinase (498 aa).

Residue Thr-12 coordinates ADP. Positions 12, 13, and 14 each coordinate ATP. Thr-12 contacts sn-glycerol 3-phosphate. Arg-16 is a binding site for ADP. Sn-glycerol 3-phosphate is bound by residues Arg-82, Glu-83, Tyr-134, and Asp-243. Glycerol contacts are provided by Arg-82, Glu-83, Tyr-134, Asp-243, and Gln-244. ADP is bound by residues Thr-265 and Gly-308. Thr-265, Gly-308, Gln-312, and Gly-409 together coordinate ATP. ADP contacts are provided by Gly-409 and Asn-413.

Belongs to the FGGY kinase family. As to quaternary structure, homotetramer and homodimer (in equilibrium).

The enzyme catalyses glycerol + ATP = sn-glycerol 3-phosphate + ADP + H(+). Its pathway is polyol metabolism; glycerol degradation via glycerol kinase pathway; sn-glycerol 3-phosphate from glycerol: step 1/1. Its activity is regulated as follows. Activated by phosphorylation and inhibited by fructose 1,6-bisphosphate (FBP). Its function is as follows. Key enzyme in the regulation of glycerol uptake and metabolism. Catalyzes the phosphorylation of glycerol to yield sn-glycerol 3-phosphate. In Clostridium botulinum (strain 657 / Type Ba4), this protein is Glycerol kinase.